A 408-amino-acid polypeptide reads, in one-letter code: CinA-like protein (408 aa).

This sequence belongs to the CinA family.

The protein is CinA-like protein of Thermotoga neapolitana (strain ATCC 49049 / DSM 4359 / NBRC 107923 / NS-E).